A 611-amino-acid polypeptide reads, in one-letter code: Leucine aminopeptidase (611 aa).

Residues 129-131 and 278-282 each bind substrate; these read QCQ and GGMEN. His-305 contributes to the Zn(2+) binding site. Catalysis depends on Glu-306, which acts as the Proton acceptor. Zn(2+) contacts are provided by His-309 and Glu-328. The Proton donor role is filled by Tyr-393. 562-564 provides a ligand contact to substrate; it reads RMK.

Belongs to the peptidase M1 family. Zn(2+) is required as a cofactor.

It localises to the cytoplasm. It catalyses the reaction an epoxide + H2O = an ethanediol. Functionally, aminopeptidase that preferentially cleaves di- and tripeptides. Also has low epoxide hydrolase activity (in vitro). Can hydrolyze the epoxide leukotriene LTA(4) but it forms preferentially 5,6-dihydroxy-7,9,11,14-eicosatetraenoic acid rather than the cytokine leukotriene B(4) as the product compared to the homologous mammalian enzyme (in vitro). The sequence is that of Leucine aminopeptidase (LKHA4) from Oryza sativa subsp. japonica (Rice).